Here is a 1506-residue protein sequence, read N- to C-terminus: Gag-Pol polyprotein (1506 aa).

2 consecutive CCHC-type zinc fingers follow at residues 385–402 and 404–421; these read QKCY…QCRQ and IICH…DCRQ. Positions 459-530 constitute a Peptidase A2 domain; it reads KKLLVDTGAD…SPVEVLGRDN (72 aa). Residue D464 is the Protease; shared with dimeric partner of the active site. The region spanning 587 to 776 is the Reverse transcriptase domain; the sequence is EGKVGRAPPH…YPAKWLGFEL (190 aa). Residues D652, D727, D728, D980, E1012, D1032, and D1085 each coordinate Mg(2+). The RNase H type-1 domain occupies 971-1093; it reads VVPGPTYYTD…IDRYISEIFL (123 aa). The segment at 1228–1269 adopts an Integrase-type zinc-finger fold; sequence ENIPLAEEEHNKWHQDAVSLHLEFGIPRTAAEDIVQQCDVCQ. Residues H1237, H1241, C1265, and C1268 each coordinate Zn(2+). The Integrase catalytic domain occupies 1270–1430; that stretch reads ENKMPSTLRG…SPMDIFIFNK (161 aa). Residues D1291, D1343, and E1379 each contribute to the Mg(2+) site. Positions 1447–1499 form a DNA-binding region, integrase-type; sequence RFCYYRTRKRGHPGEWQGPTQVLWGGDGAIVVKDRGTDRYLVIANKDVKFIPP.

It belongs to the retroviral Pol polyprotein family. As to quaternary structure, homotetramer; further associates as a homohexadecamer. Requires Mg(2+) as cofactor. Post-translationally, specific enzymatic cleavages by the viral protease yield mature proteins.

The protein resides in the virion. The enzyme catalyses Endonucleolytic cleavage to 5'-phosphomonoester.. It carries out the reaction 3'-end directed exonucleolytic cleavage of viral RNA-DNA hybrid.. The catalysed reaction is dUTP + H2O = dUMP + diphosphate + H(+). It catalyses the reaction DNA(n) + a 2'-deoxyribonucleoside 5'-triphosphate = DNA(n+1) + diphosphate. Mediates, with Gag polyprotein, the essential events in virion assembly, including binding the plasma membrane, making the protein-protein interactions necessary to create spherical particles, recruiting the viral Env proteins, and packaging the genomic RNA via direct interactions with the RNA packaging sequence. Its function is as follows. Targets the polyprotein to the plasma membrane. In terms of biological role, forms the core that encapsulates the genomic RNA-nucleocapsid complex in the virion. Functionally, encapsulates and protects viral dimeric unspliced genomic RNA (gRNA). Binds these RNAs through its zinc fingers. Acts as a nucleic acid chaperone which is involved in rearrangement of nucleic acid secondary structure during gRNA retrotranscription. Also facilitates template switch leading to recombination. The aspartyl protease mediates proteolytic cleavages of Gag and Gag-Pol polyproteins during or shortly after the release of the virion from the plasma membrane. Cleavages take place as an ordered, step-wise cascade to yield mature proteins. This process is called maturation. Displays maximal activity during the budding process just prior to particle release from the cell. Its function is as follows. RT is a multifunctional enzyme that converts the viral dimeric RNA genome into dsDNA in the cytoplasm, shortly after virus entry into the cell. This enzyme displays a DNA polymerase activity that can copy either DNA or RNA templates, and a ribonuclease H (RNase H) activity that cleaves the RNA strand of RNA-DNA heteroduplexes in a partially processive 3' to 5' endonucleasic mode. Conversion of viral genomic RNA into dsDNA requires many steps. A tRNA-Trp binds to the primer-binding site (PBS) situated at the 5' end of the viral RNA. RT uses the 3' end of the tRNA primer to perfom a short round of RNA-dependent minus-strand DNA synthesis. The reading proceeds through the U5 region and ends after the repeated (R) region which is present at both ends of viral RNA. The portion of the RNA-DNA heteroduplex is digested by the RNase H, resulting in a ssDNA product attached to the tRNA primer. This ssDNA/tRNA hybridizes with the identical R region situated at the 3' end of viral RNA. This template exchange, known as minus-strand DNA strong stop transfer, can be either intra- or intermolecular. RT uses the 3' end of this newly synthesized short ssDNA to perfom the RNA-dependent minus-strand DNA synthesis of the whole template. RNase H digests the RNA template except for a polypurine tract (PPT) situated at the 5' end of the genome. It is not clear if both polymerase and RNase H activities are simultaneous. RNase H probably can proceed both in a polymerase-dependent (RNA cut into small fragments by the same RT performing DNA synthesis) and a polymerase-independent mode (cleavage of remaining RNA fragments by free RTs). Secondly, RT performs DNA-directed plus-strand DNA synthesis using the PPT that has not been removed by RNase H as primers. PPT and tRNA primers are then removed by RNase H. The 3' and 5' ssDNA PBS regions hybridize to form a circular dsDNA intermediate. Strand displacement synthesis by RT to the PBS and PPT ends produces a blunt ended, linear dsDNA copy of the viral genome that includes long terminal repeats (LTRs) at both ends. In terms of biological role, catalyzes viral DNA integration into the host chromosome, by performing a series of DNA cutting and joining reactions. In Ovis aries (Sheep), this protein is Gag-Pol polyprotein (pol).